The sequence spans 590 residues: Muscarinic acetylcholine receptor M3 (590 aa).

Residues Met-1–Gln-67 lie on the Extracellular side of the membrane. 5 N-linked (GlcNAc...) asparagine glycosylation sites follow: Asn-5, Asn-6, Asn-15, Asn-41, and Asn-48. The chain crosses the membrane as a helical span at residues Val-68–Val-91. Over Ser-92–Asn-104 the chain is Cytoplasmic. The helical transmembrane segment at Tyr-105 to Ile-130 threads the bilayer. Residues Met-131 to Asp-142 are Extracellular-facing. A disulfide bridge links Cys-141 with Cys-221. Residues Leu-143–Phe-164 traverse the membrane as a helical segment. The Cytoplasmic portion of the chain corresponds to Asp-165–Arg-184. Residues Ala-185 to Phe-206 traverse the membrane as a helical segment. At Trp-207–Pro-229 the chain is on the extracellular side. The helical transmembrane segment at Thr-230–Trp-252 threads the bilayer. At Arg-253 to Gln-491 the chain is on the cytoplasmic side. Positions Ala-275–Val-281 match the Basolateral sorting signal motif. A disordered region spans residues Ser-323–Ile-357. Residues Ser-334 to Ser-345 are compositionally biased toward low complexity. Ser-385 is modified (phosphoserine). The chain crosses the membrane as a helical span at residues Thr-492–Asn-514. The Extracellular segment spans residues Thr-515–Trp-526. Cys-517 and Cys-520 are disulfide-bonded. A helical membrane pass occupies residues Asn-527–Leu-546. The Cytoplasmic segment spans residues Cys-547 to Leu-590.

It belongs to the G-protein coupled receptor 1 family. Muscarinic acetylcholine receptor subfamily. CHRM3 sub-subfamily. Homodimer; the dimers can form tetramers. Interacts with NALCN. Interacts with TMEM147.

It localises to the cell membrane. The protein resides in the postsynaptic cell membrane. It is found in the basolateral cell membrane. Its subcellular location is the endoplasmic reticulum membrane. In terms of biological role, the muscarinic acetylcholine receptor mediates various cellular responses, including inhibition of adenylate cyclase, breakdown of phosphoinositides and modulation of potassium channels through the action of G proteins. Primary transducing effect is Pi turnover. The protein is Muscarinic acetylcholine receptor M3 (CHRM3) of Gorilla gorilla gorilla (Western lowland gorilla).